Reading from the N-terminus, the 662-residue chain is ABC transporter G family member 25 (662 aa).

A disordered region spans residues 1–30; sequence MSAFDGVENQMNGPDSSPRLSQDPREPRSL. Positions 9–20 are enriched in polar residues; that stretch reads NQMNGPDSSPRL. N-linked (GlcNAc...) asparagine glycosylation occurs at Asn56. In terms of domain architecture, ABC transporter spans 69-308; it reads QKPSDETRST…FESVGFSPAF (240 aa). 101-108 contributes to the ATP binding site; that stretch reads GPSGSGKS. Asn122 carries an N-linked (GlcNAc...) asparagine glycan. Helical transmembrane passes span 374-394, 406-426, 437-457, 489-509, 522-542, 547-567, and 629-649; these read VNGGGITTCIATWFSQLCILL, FDLLRIFQVVAASILCGLMWW, LGLLFFISIFWGVLPSFNAVF, LSMELVLPASFLTFTYWMVYL, VLLLYVLASQGLGLALGAAIM, ASTIVTVTMLAFVLTGGYYVN, and VIGDVGMWTSVGVLFLMFFGY. Residues 388–594 form the ABC transmembrane type-2 domain; it reads SQLCILLHRL…CYRLLVAIQY (207 aa).

This sequence belongs to the ABC transporter superfamily. ABCG family. Eye pigment precursor importer (TC 3.A.1.204) subfamily. In terms of tissue distribution, mainly expressed in vascular tissues,predominantly in phloem companion cells, with highest levels in roots and seeds, and lower levels in seedlings, stems, leaves and flowers. Mostly observed in inflorescence meristems relative to cauline leaves and developing siliques. In seeds, mainly expressed in the endosperm and, to a lesser extent, in the embryo.

It localises to the cell membrane. It carries out the reaction abscisate(in) + ATP + H2O = abscisate(out) + ADP + phosphate + H(+). ADP and vanadate (ABC transporters inhibitor) inhibit the ATP-dependent abscisic acid (ABA) uptake. In terms of biological role, high affinity abscisic acid (ABA) transporter that mediates the export of ABA, with a preference for (+)-ABA, through the plasma membrane, especially in vascular tissues (e.g. phloem companion cells), and is involved in the intercellular ABA signaling pathway. Together with ABCG31, export ABA from the endosperm to deliver it to the embryo via ABCG30 and ABCG40-mediated import to suppress radicle extension and subsequent embryonic growth. In Arabidopsis thaliana (Mouse-ear cress), this protein is ABC transporter G family member 25.